Here is a 139-residue protein sequence, read N- to C-terminus: Putative pre-16S rRNA nuclease (139 aa).

Belongs to the YqgF nuclease family.

It localises to the cytoplasm. Its function is as follows. Could be a nuclease involved in processing of the 5'-end of pre-16S rRNA. The chain is Putative pre-16S rRNA nuclease from Streptococcus agalactiae serotype Ia (strain ATCC 27591 / A909 / CDC SS700).